Here is a 713-residue protein sequence, read N- to C-terminus: Phosphoribosylformylglycinamidine synthase subunit PurL (713 aa).

A compositionally biased stretch (basic and acidic residues) spans 1-17 (MSLSPSDRELVTEELGR). The tract at residues 1–20 (MSLSPSDRELVTEELGREPT) is disordered. The active site involves His34. Tyr37 provides a ligand contact to ATP. Glu85 contributes to the Mg(2+) binding site. Residues 86 to 89 (SHNH) and Arg108 contribute to the substrate site. The Proton acceptor role is filled by His87. Asp109 provides a ligand contact to Mg(2+). A substrate-binding site is contributed by Gln233. Asp261 is a Mg(2+) binding site. 305 to 307 (ESQ) is a binding site for substrate. Residues Asp480 and Gly517 each coordinate ATP. Position 518 (Asn518) interacts with Mg(2+). Ser520 serves as a coordination point for substrate.

The protein belongs to the FGAMS family. Monomer. Part of the FGAM synthase complex composed of 1 PurL, 1 PurQ and 2 PurS subunits.

It localises to the cytoplasm. It catalyses the reaction N(2)-formyl-N(1)-(5-phospho-beta-D-ribosyl)glycinamide + L-glutamine + ATP + H2O = 2-formamido-N(1)-(5-O-phospho-beta-D-ribosyl)acetamidine + L-glutamate + ADP + phosphate + H(+). It participates in purine metabolism; IMP biosynthesis via de novo pathway; 5-amino-1-(5-phospho-D-ribosyl)imidazole from N(2)-formyl-N(1)-(5-phospho-D-ribosyl)glycinamide: step 1/2. In terms of biological role, part of the phosphoribosylformylglycinamidine synthase complex involved in the purines biosynthetic pathway. Catalyzes the ATP-dependent conversion of formylglycinamide ribonucleotide (FGAR) and glutamine to yield formylglycinamidine ribonucleotide (FGAM) and glutamate. The FGAM synthase complex is composed of three subunits. PurQ produces an ammonia molecule by converting glutamine to glutamate. PurL transfers the ammonia molecule to FGAR to form FGAM in an ATP-dependent manner. PurS interacts with PurQ and PurL and is thought to assist in the transfer of the ammonia molecule from PurQ to PurL. This chain is Phosphoribosylformylglycinamidine synthase subunit PurL, found in Natronomonas pharaonis (strain ATCC 35678 / DSM 2160 / CIP 103997 / JCM 8858 / NBRC 14720 / NCIMB 2260 / Gabara) (Halobacterium pharaonis).